The following is a 350-amino-acid chain: Holliday junction branch migration complex subunit RuvB (350 aa).

The interval 4 to 184 (TDRLIAAQPQ…FGIVQRLEFY (181 aa)) is large ATPase domain (RuvB-L). ATP is bound by residues I23, R24, G65, K68, T69, T70, 131–133 (EDY), R174, Y184, and R221. T69 lines the Mg(2+) pocket. Residues 185-255 (AVEELTEIVV…IADQALNMLH (71 aa)) are small ATPAse domain (RuvB-S). The head domain (RuvB-H) stretch occupies residues 258 to 350 (RHGLDHMDRR…PLTPPGESDA (93 aa)). R294, R313, and R318 together coordinate DNA.

This sequence belongs to the RuvB family. Homohexamer. Forms an RuvA(8)-RuvB(12)-Holliday junction (HJ) complex. HJ DNA is sandwiched between 2 RuvA tetramers; dsDNA enters through RuvA and exits via RuvB. An RuvB hexamer assembles on each DNA strand where it exits the tetramer. Each RuvB hexamer is contacted by two RuvA subunits (via domain III) on 2 adjacent RuvB subunits; this complex drives branch migration. In the full resolvosome a probable DNA-RuvA(4)-RuvB(12)-RuvC(2) complex forms which resolves the HJ.

It is found in the cytoplasm. It carries out the reaction ATP + H2O = ADP + phosphate + H(+). The RuvA-RuvB-RuvC complex processes Holliday junction (HJ) DNA during genetic recombination and DNA repair, while the RuvA-RuvB complex plays an important role in the rescue of blocked DNA replication forks via replication fork reversal (RFR). RuvA specifically binds to HJ cruciform DNA, conferring on it an open structure. The RuvB hexamer acts as an ATP-dependent pump, pulling dsDNA into and through the RuvAB complex. RuvB forms 2 homohexamers on either side of HJ DNA bound by 1 or 2 RuvA tetramers; 4 subunits per hexamer contact DNA at a time. Coordinated motions by a converter formed by DNA-disengaged RuvB subunits stimulates ATP hydrolysis and nucleotide exchange. Immobilization of the converter enables RuvB to convert the ATP-contained energy into a lever motion, pulling 2 nucleotides of DNA out of the RuvA tetramer per ATP hydrolyzed, thus driving DNA branch migration. The RuvB motors rotate together with the DNA substrate, which together with the progressing nucleotide cycle form the mechanistic basis for DNA recombination by continuous HJ branch migration. Branch migration allows RuvC to scan DNA until it finds its consensus sequence, where it cleaves and resolves cruciform DNA. This chain is Holliday junction branch migration complex subunit RuvB, found in Chromohalobacter salexigens (strain ATCC BAA-138 / DSM 3043 / CIP 106854 / NCIMB 13768 / 1H11).